A 189-amino-acid polypeptide reads, in one-letter code: Potassium-transporting ATPase KdpC subunit (189 aa).

A helical transmembrane segment spans residues 6-26 (PAILMLIIFTILCGGIYPAVV).

This sequence belongs to the KdpC family. In terms of assembly, the system is composed of three essential subunits: KdpA, KdpB and KdpC.

It is found in the cell inner membrane. Its function is as follows. Part of the high-affinity ATP-driven potassium transport (or Kdp) system, which catalyzes the hydrolysis of ATP coupled with the electrogenic transport of potassium into the cytoplasm. This subunit acts as a catalytic chaperone that increases the ATP-binding affinity of the ATP-hydrolyzing subunit KdpB by the formation of a transient KdpB/KdpC/ATP ternary complex. The protein is Potassium-transporting ATPase KdpC subunit of Geobacter sulfurreducens (strain ATCC 51573 / DSM 12127 / PCA).